The chain runs to 619 residues: Coagulation factor X-activating enzyme heavy chain (619 aa).

The signal sequence occupies residues 1–20 (MMQVLLVTISLAVFPYQGSS). Residues 21 to 188 (IILESGNVND…SDKPIKKASQ (168 aa)) constitute a propeptide that is removed on maturation. The Peptidase M12B domain occupies 199 to 393 (IFIELVIIVD…YKPKCIFNPP (195 aa)). Cysteines 215 and 251 form a disulfide. Residues Asn-216 and Asn-257 are each glycosylated (N-linked (GlcNAc...) (complex) asparagine). 3 disulfides stabilise this stretch: Cys-308-Cys-388, Cys-348-Cys-372, and Cys-350-Cys-355. Zn(2+) is bound at residue His-333. Residue Glu-334 is part of the active site. Zn(2+)-binding residues include His-337 and His-343. Residues Asn-351 and Asn-371 are each glycosylated (N-linked (GlcNAc...) (complex) asparagine). Positions 401-487 (PPVCGNEIWE…ECPRDQLQQN (87 aa)) constitute a Disintegrin domain. Ca(2+) contacts are provided by Val-403, Asn-406, Ile-408, Glu-410, Glu-413, and Asp-416. 14 cysteine pairs are disulfide-bonded: Cys-404/Cys-433, Cys-415/Cys-428, Cys-417/Cys-423, Cys-427/Cys-450, Cys-441/Cys-447, Cys-446/Cys-472, Cys-459/Cys-479, Cys-466/Cys-498, Cys-491/Cys-503, Cys-510/Cys-560, Cys-525/Cys-571, Cys-538/Cys-548, Cys-555/Cys-597, and Cys-591/Cys-603. The short motif at 465-467 (ECD) is the D/ECD-tripeptide element. Ca(2+) contacts are provided by Asp-467, Val-468, Glu-470, Asp-482, and Gln-483.

Belongs to the venom metalloproteinase (M12B) family. P-III subfamily. P-IIId sub-subfamily. Heterotrimer; disulfide-linked. The heterotrimer consists of 1 heavy chain and 2 light chains (lectins): LC1 and LC2. Zn(2+) serves as cofactor. N-glycosylated; probably required for conformation. Removal of easily accessible sugars does not change its functional capacity, but removal of the core sugars with N-glycanase causes a virtually complete loss of enzyme activity, apparently as a result of major conformational changes in the molecule. Not O-glycosylated. As to expression, expressed by the venom gland.

Its subcellular location is the secreted. It catalyses the reaction Specifically activates several components of the blood clotting system, including coagulation factor X, coagulation factor IX and protein C by cleavage of Arg-|-Xaa bonds. Has no action on insulin B chain.. Catalytic subunit of blood coagulation factor X-activating enzyme. Activates coagulation factor X (F10) by cleaving the Arg-Ile bond and is also able to activate coagulation factor IX (F9) and protein S (PROS1) by specific cleavage of Arg-Ile and Arg-Val bonds. The sequence is that of Coagulation factor X-activating enzyme heavy chain from Daboia siamensis (Eastern Russel's viper).